The chain runs to 381 residues: Dual-specificity RNA methyltransferase RlmN (381 aa).

The active-site Proton acceptor is Glu-96. The Radical SAM core domain occupies 102-342; the sequence is TDDRGTLCVS…TRTTRGDDID (241 aa). Cys-109 and Cys-345 are joined by a disulfide. [4Fe-4S] cluster-binding residues include Cys-116, Cys-120, and Cys-123. Residues 170-171, Ser-202, 224-226, and Asn-302 each bind S-adenosyl-L-methionine; these read GE and SLH. Cys-345 functions as the S-methylcysteine intermediate in the catalytic mechanism.

The protein belongs to the radical SAM superfamily. RlmN family. Requires [4Fe-4S] cluster as cofactor.

It is found in the cytoplasm. It carries out the reaction adenosine(2503) in 23S rRNA + 2 reduced [2Fe-2S]-[ferredoxin] + 2 S-adenosyl-L-methionine = 2-methyladenosine(2503) in 23S rRNA + 5'-deoxyadenosine + L-methionine + 2 oxidized [2Fe-2S]-[ferredoxin] + S-adenosyl-L-homocysteine. The catalysed reaction is adenosine(37) in tRNA + 2 reduced [2Fe-2S]-[ferredoxin] + 2 S-adenosyl-L-methionine = 2-methyladenosine(37) in tRNA + 5'-deoxyadenosine + L-methionine + 2 oxidized [2Fe-2S]-[ferredoxin] + S-adenosyl-L-homocysteine. In terms of biological role, specifically methylates position 2 of adenine 2503 in 23S rRNA and position 2 of adenine 37 in tRNAs. m2A2503 modification seems to play a crucial role in the proofreading step occurring at the peptidyl transferase center and thus would serve to optimize ribosomal fidelity. The sequence is that of Dual-specificity RNA methyltransferase RlmN from Pseudomonas putida (strain ATCC 700007 / DSM 6899 / JCM 31910 / BCRC 17059 / LMG 24140 / F1).